The chain runs to 416 residues: Leu/Ile/Val-binding protein homolog 4 (416 aa).

The first 26 residues, 1–26 (MSLKVFLQAGVACAALSLAGAAGASA), serve as a signal peptide directing secretion.

This sequence belongs to the leucine-binding protein family.

Component of an amino-acid transport system. This is Leu/Ile/Val-binding protein homolog 4 from Brucella melitensis biotype 1 (strain ATCC 23456 / CCUG 17765 / NCTC 10094 / 16M).